The following is a 305-amino-acid chain: MSDFDRVRDYLTALQDRICNVVETIDGQSHFHEDHWQRTEGGGGRTRLLRDGAVFEQAGIGFSDVCGTHLPPSASVRRPELAGANWRACGVSLVFHPKNPFVPTTHLNVRYFRAERDGKQVAAWFGGGFDLTPFYPFDEDVVHWHTVARDLCAPFGDERYAAHKRWCDEYFVLRHRNETRGVGGLFFDDLDKDFERDFAYQRAVGDGFLDAYFPIVTRRHDTPYGDRERAFQLYRRGRYVEFNLLFDRGTLFGLQSGGRAESILISLPPLVRWEYGYHPLPGSAEARLADYLLPRDWLNESRICE.

Substrate is bound at residue serine 92. Histidine 96 and histidine 106 together coordinate a divalent metal cation. Histidine 106 acts as the Proton donor in catalysis. Asparagine 108–arginine 110 serves as a coordination point for substrate. 2 residues coordinate a divalent metal cation: histidine 145 and histidine 175. Residues tyrosine 239–glutamate 274 form an important for dimerization region. Substrate is bound at residue glycine 257–arginine 259.

Belongs to the aerobic coproporphyrinogen-III oxidase family. Homodimer. A divalent metal cation serves as cofactor.

The protein localises to the cytoplasm. The enzyme catalyses coproporphyrinogen III + O2 + 2 H(+) = protoporphyrinogen IX + 2 CO2 + 2 H2O. The protein operates within porphyrin-containing compound metabolism; protoporphyrin-IX biosynthesis; protoporphyrinogen-IX from coproporphyrinogen-III (O2 route): step 1/1. Functionally, involved in the heme biosynthesis. Catalyzes the aerobic oxidative decarboxylation of propionate groups of rings A and B of coproporphyrinogen-III to yield the vinyl groups in protoporphyrinogen-IX. The protein is Oxygen-dependent coproporphyrinogen-III oxidase of Xylella fastidiosa (strain 9a5c).